Here is a 283-residue protein sequence, read N- to C-terminus: Elongation factor Ts (283 aa).

The tract at residues 80 to 83 is involved in Mg(2+) ion dislocation from EF-Tu; that stretch reads TDFV.

Belongs to the EF-Ts family.

It is found in the cytoplasm. Associates with the EF-Tu.GDP complex and induces the exchange of GDP to GTP. It remains bound to the aminoacyl-tRNA.EF-Tu.GTP complex up to the GTP hydrolysis stage on the ribosome. This is Elongation factor Ts from Haemophilus influenzae (strain 86-028NP).